Consider the following 771-residue polypeptide: Heat shock transcription factor (771 aa).

The interval Met1–Ser70 is disordered. Composition is skewed to low complexity over residues Pro11–Pro23 and Leu31–Leu42. Residues Asn43 to Ile62 are compositionally biased toward polar residues. Residues Met78–Pro168 mediate DNA binding. A disordered region spans residues Arg183–Leu266. Composition is skewed to low complexity over residues Ser189–Leu199 and Ser212–Gly233. Over residues Asn238 to Ser262 the composition is skewed to polar residues. Residues Gly280–Leu333 form an involved in trimerization region. 2 stretches are compositionally biased toward basic and acidic residues: residues Arg350–Ala372 and Thr399–Val415. Disordered stretches follow at residues Arg350 to Ala513, Gln590 to Thr634, and Ser708 to Lys771. Over residues Gly418–Phe448 the composition is skewed to polar residues. 2 stretches are compositionally biased toward low complexity: residues Leu497–Ser511 and His599–Ala620.

It belongs to the HSF family. In terms of assembly, homotrimer. Homotrimerization increases the affinity of HSF1 to DNA. Interacts with transcriptional coregulator SSA1 on chromatin. Post-translationally, phosphorylated at high temperature.

It localises to the nucleus. In terms of biological role, DNA-binding transcription factor that specifically binds heat shock promoter elements (HSE) and activates transcription. Promotes thermotolerance by transiently regulating a subset of genes. Induces expression of STI, SSA1, SSA2, HSP78 and KAR2 during the heat response. This is Heat shock transcription factor from Cryptococcus neoformans var. grubii serotype A (strain H99 / ATCC 208821 / CBS 10515 / FGSC 9487) (Filobasidiella neoformans var. grubii).